The primary structure comprises 98 residues: Large ribosomal subunit protein uL23 (98 aa).

The protein belongs to the universal ribosomal protein uL23 family. In terms of assembly, part of the 50S ribosomal subunit. Contacts protein L29, and trigger factor when it is bound to the ribosome.

Functionally, one of the early assembly proteins it binds 23S rRNA. One of the proteins that surrounds the polypeptide exit tunnel on the outside of the ribosome. Forms the main docking site for trigger factor binding to the ribosome. The chain is Large ribosomal subunit protein uL23 from Teredinibacter turnerae (strain ATCC 39867 / T7901).